The primary structure comprises 147 residues: AP-2 complex subunit sigma (147 aa).

This sequence belongs to the adaptor complexes small subunit family. Adaptor protein complex 2 (AP-2) is a heterotetramer composed of two large adaptins (alpha-type subunit APL3 and beta-type subunit APL1), a medium chain (mu-type subunit APM4) and a small adaptin (sigma-type subunit APS2). Interacts with APL1.

It is found in the cell membrane. It localises to the membrane. Its subcellular location is the coated pit. Component of the adaptor complexes which link clathrin to receptors in coated vesicles. Clathrin-associated protein complexes are believed to interact with the cytoplasmic tails of membrane proteins, leading to their selection and concentration. The chain is AP-2 complex subunit sigma (APS2) from Saccharomyces cerevisiae (strain ATCC 204508 / S288c) (Baker's yeast).